Consider the following 62-residue polypeptide: Large ribosomal subunit protein uL30 (62 aa).

The protein belongs to the universal ribosomal protein uL30 family. In terms of assembly, part of the 50S ribosomal subunit.

This is Large ribosomal subunit protein uL30 from Nitrosospira multiformis (strain ATCC 25196 / NCIMB 11849 / C 71).